The following is a 436-amino-acid chain: Probable glucose-6-phosphate isomerase (436 aa).

The active-site Proton donor is the Glu272. Active-site residues include His293 and Lys404.

The protein belongs to the GPI family.

It localises to the cytoplasm. It carries out the reaction alpha-D-glucose 6-phosphate = beta-D-fructose 6-phosphate. The protein operates within carbohydrate biosynthesis; gluconeogenesis. Its pathway is carbohydrate degradation; glycolysis; D-glyceraldehyde 3-phosphate and glycerone phosphate from D-glucose: step 2/4. Functionally, catalyzes the reversible isomerization of glucose-6-phosphate to fructose-6-phosphate. This Haloarcula marismortui (strain ATCC 43049 / DSM 3752 / JCM 8966 / VKM B-1809) (Halobacterium marismortui) protein is Probable glucose-6-phosphate isomerase.